An 877-amino-acid polypeptide reads, in one-letter code: Leucine--tRNA ligase (877 aa).

The short motif at 43–53 (PYPSGRIHMGH) is the 'HIGH' region element. A 'KMSKS' region motif is present at residues 628-632 (KMSKS). Residue Lys-631 coordinates ATP.

The protein belongs to the class-I aminoacyl-tRNA synthetase family.

It is found in the cytoplasm. It catalyses the reaction tRNA(Leu) + L-leucine + ATP = L-leucyl-tRNA(Leu) + AMP + diphosphate. This is Leucine--tRNA ligase from Brucella anthropi (strain ATCC 49188 / DSM 6882 / CCUG 24695 / JCM 21032 / LMG 3331 / NBRC 15819 / NCTC 12168 / Alc 37) (Ochrobactrum anthropi).